We begin with the raw amino-acid sequence, 318 residues long: Guanidinopropionase (318 aa).

Residues His-126, Asp-148, His-150, Asp-152, Asp-240, and Asp-242 each coordinate Mn(2+).

The protein belongs to the arginase family. Agmatinase subfamily. Homohexamer. Mn(2+) serves as cofactor.

The catalysed reaction is 3-guanidinopropanoate + H2O = urea + beta-alanine. Functionally, catalyzes the hydrolysis of 3-guanidinopropanoate to beta-alanine and urea. Possesses low activity against 4-guanidinobutanoate. Has no activity against arginine and agmatine. This is Guanidinopropionase (gpuA) from Pseudomonas aeruginosa (strain ATCC 15692 / DSM 22644 / CIP 104116 / JCM 14847 / LMG 12228 / 1C / PRS 101 / PAO1).